A 281-amino-acid chain; its full sequence is Nucleotide-binding protein PSHAa2554 (281 aa).

8-15 (GRSGSGKS) provides a ligand contact to ATP. 56-59 (DVRN) serves as a coordination point for GTP.

This sequence belongs to the RapZ-like family.

In terms of biological role, displays ATPase and GTPase activities. This is Nucleotide-binding protein PSHAa2554 from Pseudoalteromonas translucida (strain TAC 125).